A 250-amino-acid chain; its full sequence is Triosephosphate isomerase (250 aa).

9–11 (NWK) lines the substrate pocket. The active-site Electrophile is histidine 96. Glutamate 166 serves as the catalytic Proton acceptor. Residues glycine 172, serine 212, and 233–234 (GG) each bind substrate.

This sequence belongs to the triosephosphate isomerase family. In terms of assembly, homodimer.

The protein resides in the cytoplasm. The enzyme catalyses D-glyceraldehyde 3-phosphate = dihydroxyacetone phosphate. Its pathway is carbohydrate biosynthesis; gluconeogenesis. It participates in carbohydrate degradation; glycolysis; D-glyceraldehyde 3-phosphate from glycerone phosphate: step 1/1. Functionally, involved in the gluconeogenesis. Catalyzes stereospecifically the conversion of dihydroxyacetone phosphate (DHAP) to D-glyceraldehyde-3-phosphate (G3P). In Chlorobium luteolum (strain DSM 273 / BCRC 81028 / 2530) (Pelodictyon luteolum), this protein is Triosephosphate isomerase.